Consider the following 863-residue polypeptide: Leucine--tRNA ligase (863 aa).

The short motif at 42 to 52 is the 'HIGH' region element; sequence PYPSGRLHMGH. The 'KMSKS' region motif lies at 622–626; sequence KMSKS. Lysine 625 contacts ATP.

It belongs to the class-I aminoacyl-tRNA synthetase family.

The protein localises to the cytoplasm. The enzyme catalyses tRNA(Leu) + L-leucine + ATP = L-leucyl-tRNA(Leu) + AMP + diphosphate. This Shewanella sediminis (strain HAW-EB3) protein is Leucine--tRNA ligase.